A 113-amino-acid chain; its full sequence is Flagellar hook-basal body complex protein FliE (113 aa).

It belongs to the FliE family.

The protein localises to the bacterial flagellum basal body. In Rhizobium etli (strain ATCC 51251 / DSM 11541 / JCM 21823 / NBRC 15573 / CFN 42), this protein is Flagellar hook-basal body complex protein FliE.